The following is a 394-amino-acid chain: C-19 steroid 1alpha-hydroxylase (394 aa).

Residues His81, Arg85, Arg281, Gly335, His338, and Cys340 each coordinate heme b.

The protein belongs to the cytochrome P450 family. Heme b is required as a cofactor.

It catalyses the reaction testosterone + 2 reduced [2Fe-2S]-[ferredoxin] + O2 + 2 H(+) = 1alpha-hydroxytestosterone + 2 oxidized [2Fe-2S]-[ferredoxin] + H2O. The enzyme catalyses androst-4-ene-3,17-dione + 2 reduced [2Fe-2S]-[ferredoxin] + O2 + 2 H(+) = 1alpha-hydroxyandrost-4-ene-3,17-dione + 2 oxidized [2Fe-2S]-[ferredoxin] + H2O. Functionally, hydroxylase that can catalyze the in vitro conversion of the sesquiterpenoid nootkatone, a natural organic compound produced by some plants, to at least five hydrophilic products. The native ferredoxin reductase FdR_B and either Fdx2 or Fdx8 ferredoxins can act as the redox partners for the conversion of nootkatone. In terms of biological role, in addition, acts as a steroid 1alpha-hydroxylase, when associated in vitro with the surrogate redox partners bovine adrenodoxin (Adx) and adrenodoxin reductase (Adr). Acts on several C-19 steroid substrates, including testosterone and androstenedione, which are hydroxylated to 1alpha-hydroxytestosterone and 1alpha-hydroxyandrostenedione, respectively. Can use their derivatives testosterone-acetate and 11-oxoandrostenedione, but not vitamin D3 and 25-hydroxyvitamin D3. Also catalyzes the hydroxylation of the C-21 steroid 11-deoxycorticosterone to 1alpha-hydroxy-11-deoxycorticosterone. Catalyzes the hydroxylation of the C-21 steroid progesterone, leading to the formation of seven products: two major (1alpha-hydroxyprogesterone and 17alpha-hydroxyprogesterone) and five minor products. This is C-19 steroid 1alpha-hydroxylase from Sorangium cellulosum (strain So ce56) (Polyangium cellulosum (strain So ce56)).